A 438-amino-acid chain; its full sequence is uncharacterized protein (438 aa).

The signal sequence occupies residues 1–32 (MARPLLGKTSSVRRRLESLSACSIFFFLRKFC).

This is an uncharacterized protein from Frog virus 3 (isolate Goorha) (FV-3).